A 3795-amino-acid polypeptide reads, in one-letter code: NBPF family member NBPF10 (3795 aa).

The stretch at 75-119 (RQFKEEKLAEQLKQAEELRQYKVLVHSQERELTQLREKLREGRDA) forms a coiled coil. Residues 161–200 (KLSPENDEDEDEDVQVEEAEKVLESSAPREVQKAEESKVP) are disordered. The segment covering 165–177 (ENDEDEDEDVQVE) has biased composition (acidic residues). The region spanning 165-259 (ENDEDEDEDV…ECQDALNILP (95 aa)) is the Olduvai 1 domain. The span at 190–200 (EVQKAEESKVP) shows a compositional bias: basic and acidic residues. Residues 346–390 (RQFKEEKLAEQLKQAEELRQYKVLVHAQERELTQLKEKLREGRDA) are a coiled coil. Olduvai domains follow at residues 436–528 (ENDN…HIIP), 529–600 (ENES…VDIG), 601–692 (RHRW…PSCP), 695–750 (SREL…LDVD), 751–843 (RIKK…RSKK), 844–936 (ERRR…PSCP), 939–994 (SREL…LDVD), 995–1087 (RIKK…RSKK), 1088–1180 (ERRR…PSCP), 1183–1238 (SREL…LDVD), 1239–1331 (RIKK…RSKK), 1332–1424 (ERRR…PSCP), 1427–1482 (SREL…LDVD), 1483–1575 (RIKK…RSKK), 1576–1668 (ERRR…PSCP), 1671–1726 (SREL…LDVD), 1727–1819 (RIKK…RSKK), 1820–1912 (ERRR…PSCP), 1915–1970 (SREL…LDVD), 1971–2063 (RIKK…RSKK), 2064–2156 (ERRR…PSCP), 2159–2214 (SREL…LDVD), 2215–2307 (RIKK…RSKK), 2308–2400 (ERRR…PSCP), 2403–2458 (SREL…LDVD), 2459–2551 (RIKK…RSKK), 2552–2644 (ERRR…PSCP), 2647–2702 (SREL…LDVD), 2703–2795 (RIKK…RSKK), 2796–2888 (ERRR…PSCP), 2891–2946 (SREL…LDVD), 2947–3039 (RIKK…RSKK), 3040–3132 (ERRR…PSCP), 3135–3190 (SREL…LDVD), 3191–3283 (RIKK…RSKK), 3284–3376 (ERRR…PSCP), 3379–3434 (SREL…LDVD), 3435–3527 (RIKK…RSKK), 3528–3620 (ERRR…PSCP), 3623–3696 (SREL…RSKK), and 3697–3795 (ERRR…IFPQ). 2 disordered regions span residues 451 to 475 (EKVQ…EDSL) and 520 to 566 (WEDA…EGYS). Composition is skewed to acidic residues over residues 530 to 539 (NESDDEEEEE) and 550 to 562 (ESEE…ESWD). Positions 830 to 868 (KGKGKKRRGRRSKKERRRGRKEGEEDQNPPCPRLSRELL) are disordered. The segment covering 831-849 (GKGKKRRGRRSKKERRRGR) has biased composition (basic residues). The disordered stretch occupies residues 1073-1109 (KKGKGKKRRGRRSKKERRRGRKEGEEDQNPPCPRLSR). Positions 1075–1093 (GKGKKRRGRRSKKERRRGR) are enriched in basic residues. Disordered regions lie at residues 1242–1261 (KDEE…SREL) and 1318–1353 (KGKG…RLSR). A compositionally biased stretch (basic residues) spans 1319–1337 (GKGKKRRGRRSKKERRRGR). A disordered region spans residues 1562 to 1600 (KGKGKKRRGRRSKKERRRGRKEGEEDQNPPCPRLSRELL). Over residues 1563 to 1581 (GKGKKRRGRRSKKERRRGR) the composition is skewed to basic residues. Residues 1806–1844 (KGKGKKRRGRRSKKERRRGRKEGEEDQNPPCPRLSRELL) are disordered. Residues 1807 to 1825 (GKGKKRRGRRSKKERRRGR) show a composition bias toward basic residues. The segment at 2050 to 2088 (KGKGKKRRGRRSKKERRRGRKEGEEDQNPPCPRLSRELL) is disordered. The segment covering 2051 to 2069 (GKGKKRRGRRSKKERRRGR) has biased composition (basic residues). The interval 2294–2332 (KGKGKKRRGRRSKKERRRGRKEGEEDQNPPCPRLSRELL) is disordered. Basic residues predominate over residues 2295–2313 (GKGKKRRGRRSKKERRRGR). A disordered region spans residues 2538–2576 (KGKGKKRRGRRSKKERRRGRKEGEEDQNPPCPRLSRELL). Residues 2539-2557 (GKGKKRRGRRSKKERRRGR) are compositionally biased toward basic residues. Residues 2782–2820 (KGKGKKRRGRRSKKERRRGRKEGEEDQNPPCPRLSRELL) form a disordered region. Residues 2783–2801 (GKGKKRRGRRSKKERRRGR) show a composition bias toward basic residues. The disordered stretch occupies residues 3026–3064 (KGKGKKRRGRRSKKERRRGRKEGEEDQNPPCPRLSRELL). Residues 3027–3045 (GKGKKRRGRRSKKERRRGR) show a composition bias toward basic residues. 2 disordered regions span residues 3194–3213 (KDEE…SREL) and 3270–3308 (KGKG…RELL). Over residues 3271 to 3289 (GKGKKRRGRRSKKERRRGR) the composition is skewed to basic residues. 2 disordered regions span residues 3514–3552 (KGKG…RELL) and 3684–3716 (GKGK…CPRL). Basic residues-rich tracts occupy residues 3515–3533 (GKGK…RRGR) and 3684–3702 (GKGK…RRGR).

This sequence belongs to the NBPF family.

The protein resides in the cytoplasm. The polypeptide is NBPF family member NBPF10 (Homo sapiens (Human)).